Here is a 334-residue protein sequence, read N- to C-terminus: Phenazine-1-carboxylate N-methyltransferase (334 aa).

Positions 198 and 241 each coordinate S-adenosyl-L-methionine.

It belongs to the class I-like SAM-binding methyltransferase superfamily. Cation-independent O-methyltransferase family. In terms of assembly, homodimer in solution. Probably interacts transiently with PhzS.

It carries out the reaction phenazine-1-carboxylate + S-adenosyl-L-methionine = 5-methyl-phenazine-1-carboxylate + S-adenosyl-L-homocysteine. It participates in secondary metabolite biosynthesis; pyocyanine biosynthesis. Its activity is regulated as follows. In vitro, requires PhzS for activity. Functionally, involved in the biosynthesis of pyocyanine, a blue-pigmented phenazine derivative, which plays a role in virulence. Converts phenazine-1-carboxylate (PCA) to 5-methylphenazine-1-carboxylate (5-methyl-PCA). This chain is Phenazine-1-carboxylate N-methyltransferase, found in Pseudomonas aeruginosa (strain ATCC 15692 / DSM 22644 / CIP 104116 / JCM 14847 / LMG 12228 / 1C / PRS 101 / PAO1).